Consider the following 396-residue polypeptide: NADH-quinone oxidoreductase subunit D (396 aa).

This sequence belongs to the complex I 49 kDa subunit family. As to quaternary structure, NDH-1 is composed of 14 different subunits. Subunits NuoB, C, D, E, F, and G constitute the peripheral sector of the complex.

Its subcellular location is the cell inner membrane. It carries out the reaction a quinone + NADH + 5 H(+)(in) = a quinol + NAD(+) + 4 H(+)(out). In terms of biological role, NDH-1 shuttles electrons from NADH, via FMN and iron-sulfur (Fe-S) centers, to quinones in the respiratory chain. The immediate electron acceptor for the enzyme in this species is believed to be ubiquinone. Couples the redox reaction to proton translocation (for every two electrons transferred, four hydrogen ions are translocated across the cytoplasmic membrane), and thus conserves the redox energy in a proton gradient. The chain is NADH-quinone oxidoreductase subunit D from Rhodopseudomonas palustris (strain BisA53).